Here is a 143-residue protein sequence, read N- to C-terminus: Mediator of RNA polymerase II transcription subunit 22 (143 aa).

This sequence belongs to the Mediator complex subunit 22 family. In terms of assembly, component of the Mediator complex, which includes at least CDK8, MED4, MED6, MED11, MED14, MED17, MED18, MED20, MED21, MED22, MED27, MED28, MED30 and MED31.

The protein localises to the nucleus. In terms of biological role, component of the Mediator complex, a coactivator involved in the regulated transcription of nearly all RNA polymerase II-dependent genes. Mediator functions as a bridge to convey information from gene-specific regulatory proteins to the basal RNA polymerase II transcription machinery. Mediator is recruited to promoters by direct interactions with regulatory proteins and serves as a scaffold for the assembly of a functional preinitiation complex with RNA polymerase II and the general transcription factors. The protein is Mediator of RNA polymerase II transcription subunit 22 (MED22) of Drosophila melanogaster (Fruit fly).